Here is a 978-residue protein sequence, read N- to C-terminus: Glycine dehydrogenase (decarboxylating) (978 aa).

K726 is modified (N6-(pyridoxal phosphate)lysine).

It belongs to the GcvP family. The glycine cleavage system is composed of four proteins: P, T, L and H. Pyridoxal 5'-phosphate is required as a cofactor.

It carries out the reaction N(6)-[(R)-lipoyl]-L-lysyl-[glycine-cleavage complex H protein] + glycine + H(+) = N(6)-[(R)-S(8)-aminomethyldihydrolipoyl]-L-lysyl-[glycine-cleavage complex H protein] + CO2. In terms of biological role, the glycine cleavage system catalyzes the degradation of glycine. The P protein binds the alpha-amino group of glycine through its pyridoxal phosphate cofactor; CO(2) is released and the remaining methylamine moiety is then transferred to the lipoamide cofactor of the H protein. The chain is Glycine dehydrogenase (decarboxylating) from Paraburkholderia phytofirmans (strain DSM 17436 / LMG 22146 / PsJN) (Burkholderia phytofirmans).